A 115-amino-acid chain; its full sequence is MVRCHVKSPTESPPGQQGSGQQGETEHPDQARELRPEDIPVYGRTHRGRYHYRHRSHTRRRPYRRRRRRACRHRRRRRGAAGPPCAPIPGTPQASRQGSGCRRMRRRRRRCGRQL.

Residues 1 to 115 (MVRCHVKSPT…RRRRRCGRQL (115 aa)) form a disordered region. Ser8 carries the post-translational modification Phosphoserine. The segment covering 24–38 (ETEHPDQARELRPED) has biased composition (basic and acidic residues). Basic residues-rich tracts occupy residues 44-79 (RTHR…RRRG) and 102-115 (RRMR…GRQL).

This sequence belongs to the protamine P2 family. As to quaternary structure, interacts with TDRP. Post-translationally, proteolytic processing into mature chains is required for histone eviction during spermatogenesis. Transition proteins (TNP1 and TNP2) are required for processing. Testis.

Its subcellular location is the nucleus. The protein localises to the chromosome. Protamines substitute for histones in the chromatin of sperm during the haploid phase of spermatogenesis. They compact sperm DNA into a highly condensed, stable and inactive complex. The protein is Protamine-2 (PRM2) of Bos taurus (Bovine).